The chain runs to 1613 residues: Myosin-IIIa (1613 aa).

A Protein kinase domain is found at 21-287 (WEIIETIGKG…VSDLLKHKFI (267 aa)). Residues 27-35 (IGKGTYGKV) and Lys-50 contribute to the ATP site. Asp-150 acts as the Proton acceptor in catalysis. One can recognise a Myosin motor domain in the interval 338 to 1052 (KDVDDLATLD…HVEQLNLMRK (715 aa)). Positions 933–955 (LMDLLSKMVVGQPHFVRCIKPNN) are actin-binding. IQ domains are found at residues 1054–1083 (ATNK…KRKS) and 1081–1110 (RKSS…MKNT). 2 disordered regions span residues 1136–1168 (VKKQ…TAPF) and 1476–1506 (SGVS…EDST). Residues 1145–1161 (PTNESNTSTPNNKESPS) show a composition bias toward low complexity. The tract at residues 1398-1476 (EGVHHSKMVD…RHVSTHQYLS (79 aa)) is interaction with MORN4. The span at 1488–1497 (RPPRRPRKPK) shows a compositional bias: basic residues.

The protein in the C-terminal section; belongs to the TRAFAC class myosin-kinesin ATPase superfamily. Myosin family. It in the N-terminal section; belongs to the protein kinase superfamily. STE Ser/Thr protein kinase family. Interacts with MORN4. Interacts (via C-terminus) with ESPN and ESPNL. As to expression, expressed in the cochlear hair cells (at protein level). Expressed in utricle hair bundles (at protein level).

The protein resides in the cytoplasm. It is found in the cytoskeleton. Its subcellular location is the cell projection. It localises to the filopodium tip. The protein localises to the stereocilium. The catalysed reaction is L-seryl-[protein] + ATP = O-phospho-L-seryl-[protein] + ADP + H(+). The enzyme catalyses L-threonyl-[protein] + ATP = O-phospho-L-threonyl-[protein] + ADP + H(+). It catalyses the reaction ATP + H2O = ADP + phosphate + H(+). Functionally, actin-dependent motor protein with a protein kinase activity, playing an essential role in hearing. Probably plays also a role in vision. Required for normal cochlear hair bundle development and hearing. Plays an important role in the early steps of cochlear hair bundle morphogenesis. Influences the number and lengths of stereocilia to be produced and limits the growth of microvilli within the forming auditory hair bundles thereby contributing to the architecture of the hair bundle, including its staircase pattern. Involved in the elongation of actin in stereocilia tips by transporting the actin regulatory factor ESPN to the plus ends of actin filaments. The sequence is that of Myosin-IIIa (Myo3a) from Mus musculus (Mouse).